The following is a 445-amino-acid chain: N-succinylarginine dihydrolase (445 aa).

Substrate contacts are provided by residues 19–28 (AGLSFGNVAS), Asn110, and 137–138 (HR). Glu174 is an active-site residue. Arg214 lines the substrate pocket. His250 is an active-site residue. Residues Asp252 and Asn363 each contribute to the substrate site. The active-site Nucleophile is the Cys369.

This sequence belongs to the succinylarginine dihydrolase family. In terms of assembly, homodimer.

It carries out the reaction N(2)-succinyl-L-arginine + 2 H2O + 2 H(+) = N(2)-succinyl-L-ornithine + 2 NH4(+) + CO2. The protein operates within amino-acid degradation; L-arginine degradation via AST pathway; L-glutamate and succinate from L-arginine: step 2/5. Functionally, catalyzes the hydrolysis of N(2)-succinylarginine into N(2)-succinylornithine, ammonia and CO(2). The protein is N-succinylarginine dihydrolase of Shewanella pealeana (strain ATCC 700345 / ANG-SQ1).